The following is a 376-amino-acid chain: Dihydroorotate dehydrogenase (quinone) (376 aa).

Residues 74 to 78 (AGFDK) and Thr-98 each bind FMN. Lys-78 is a substrate binding site. 123 to 127 (NHMGF) provides a ligand contact to substrate. FMN-binding residues include Asn-152 and Asn-185. Asn-185 is a substrate binding site. Ser-188 (nucleophile) is an active-site residue. Position 190 (Asn-190) interacts with substrate. Positions 223 and 251 each coordinate FMN. 252–253 (NT) contributes to the substrate binding site. FMN-binding positions include Gly-280, Gly-309, and 330–331 (YT). Residues 352-376 (RNPAPSSPERMPTGIQSGRKIVMDP) are disordered.

It belongs to the dihydroorotate dehydrogenase family. Type 2 subfamily. In terms of assembly, monomer. FMN is required as a cofactor.

The protein resides in the cell membrane. It catalyses the reaction (S)-dihydroorotate + a quinone = orotate + a quinol. It participates in pyrimidine metabolism; UMP biosynthesis via de novo pathway; orotate from (S)-dihydroorotate (quinone route): step 1/1. Functionally, catalyzes the conversion of dihydroorotate to orotate with quinone as electron acceptor. The chain is Dihydroorotate dehydrogenase (quinone) from Synechococcus sp. (strain JA-3-3Ab) (Cyanobacteria bacterium Yellowstone A-Prime).